The primary structure comprises 263 residues: uncharacterized protein (263 aa).

The interval 22 to 44 is disordered; sequence IDGSDDQSDRTRSSSGDSTSNSL. The span at 34-43 shows a compositional bias: low complexity; the sequence is SSSGDSTSNS.

The protein localises to the mitochondrion. This is an uncharacterized protein from Schizosaccharomyces pombe (strain 972 / ATCC 24843) (Fission yeast).